Consider the following 129-residue polypeptide: Serum amyloid A-4 protein (129 aa).

Positions 1–18 (MKLLIGILFCTLIMGVTG) are cleaved as a signal peptide. The segment covering 107–121 (AEEWGRSGQDPDHFR) has biased composition (basic and acidic residues). The disordered stretch occupies residues 107–129 (AEEWGRSGQDPDHFRPAGLPKKY).

The protein belongs to the SAA family. Apolipoprotein of the HDL complex.

The protein resides in the secreted. Functionally, major acute phase reactant. This chain is Serum amyloid A-4 protein, found in Bos taurus (Bovine).